The chain runs to 209 residues: Pyroglutamyl-peptidase 1 (209 aa).

Residues Glu-85, Cys-149, and His-168 contribute to the active site.

It belongs to the peptidase C15 family. As to quaternary structure, monomer.

It localises to the cytoplasm. It catalyses the reaction Release of an N-terminal pyroglutamyl group from a polypeptide, the second amino acid generally not being Pro.. Functionally, removes 5-oxoproline from various penultimate amino acid residues except L-proline. The polypeptide is Pyroglutamyl-peptidase 1 (Pgpep1) (Mus musculus (Mouse)).